The sequence spans 412 residues: Phosphatidylinositol 3,4,5-trisphosphate 3-phosphatase and protein-tyrosine-phosphatase PTEN1 (412 aa).

The 170-residue stretch at 42 to 211 (RRLIIGGYDL…KYWSDLLSFS (170 aa)) folds into the Phosphatase tensin-type domain. C152 serves as the catalytic Phosphocysteine intermediate. A C2 tensin-type domain is found at 239 to 396 (VDSVFFVVSE…FSLELLFGPA (158 aa)).

Belongs to the PTEN phosphatase protein family. In terms of tissue distribution, expressed exclusively in pollen grains during the late stage of development (at protein level).

The catalysed reaction is O-phospho-L-tyrosyl-[protein] + H2O = L-tyrosyl-[protein] + phosphate. It carries out the reaction a 1,2-diacyl-sn-glycero-3-phospho-(1D-myo-inositol-3,4,5-trisphosphate) + H2O = a 1,2-diacyl-sn-glycero-3-phospho-(1D-myo-inositol-4,5-bisphosphate) + phosphate. Its activity is regulated as follows. Inhibited by vanadate. Protein tyrosine phosphatase that also exhibits lipid phosphatase activity. Can use phosphatidylinositol substrates such as PtdIns(3,4,5)P(3) as substrate. Pollen-specific phosphatase required for pollen development. The sequence is that of Phosphatidylinositol 3,4,5-trisphosphate 3-phosphatase and protein-tyrosine-phosphatase PTEN1 from Arabidopsis thaliana (Mouse-ear cress).